The following is a 152-amino-acid chain: MADQDNPVFQIQRVYLKDLSLEQPNSPAILLEQEQPNLDIQLGVEATPVGEGFFEVAVTATVQTKIKDKTMFLVEAKQAAIFEIRNVPEDQMGQIMGVVCPQIVYPYLRGNVADVINRAGFPPVHLGEINFQGMYEQQQAQAAGAAAPVTTQ.

The protein belongs to the SecB family. Homotetramer, a dimer of dimers. One homotetramer interacts with 1 SecA dimer.

Its subcellular location is the cytoplasm. One of the proteins required for the normal export of preproteins out of the cell cytoplasm. It is a molecular chaperone that binds to a subset of precursor proteins, maintaining them in a translocation-competent state. It also specifically binds to its receptor SecA. This Verminephrobacter eiseniae (strain EF01-2) protein is Protein-export protein SecB.